The following is a 331-amino-acid chain: Tetraacyldisaccharide 4'-kinase (331 aa).

58–65 provides a ligand contact to ATP; that stretch reads TVGGSGKT.

This sequence belongs to the LpxK family.

It catalyses the reaction a lipid A disaccharide + ATP = a lipid IVA + ADP + H(+). It functions in the pathway glycolipid biosynthesis; lipid IV(A) biosynthesis; lipid IV(A) from (3R)-3-hydroxytetradecanoyl-[acyl-carrier-protein] and UDP-N-acetyl-alpha-D-glucosamine: step 6/6. Its function is as follows. Transfers the gamma-phosphate of ATP to the 4'-position of a tetraacyldisaccharide 1-phosphate intermediate (termed DS-1-P) to form tetraacyldisaccharide 1,4'-bis-phosphate (lipid IVA). In Shewanella denitrificans (strain OS217 / ATCC BAA-1090 / DSM 15013), this protein is Tetraacyldisaccharide 4'-kinase.